The chain runs to 426 residues: Serine hydroxymethyltransferase (426 aa).

Residues L118 and 122-124 (GHL) each bind (6S)-5,6,7,8-tetrahydrofolate. K227 bears the N6-(pyridoxal phosphate)lysine mark.

It belongs to the SHMT family. Homodimer. It depends on pyridoxal 5'-phosphate as a cofactor.

The protein localises to the cytoplasm. It carries out the reaction (6R)-5,10-methylene-5,6,7,8-tetrahydrofolate + glycine + H2O = (6S)-5,6,7,8-tetrahydrofolate + L-serine. Its pathway is one-carbon metabolism; tetrahydrofolate interconversion. It functions in the pathway amino-acid biosynthesis; glycine biosynthesis; glycine from L-serine: step 1/1. In terms of biological role, catalyzes the reversible interconversion of serine and glycine with tetrahydrofolate (THF) serving as the one-carbon carrier. This reaction serves as the major source of one-carbon groups required for the biosynthesis of purines, thymidylate, methionine, and other important biomolecules. Also exhibits THF-independent aldolase activity toward beta-hydroxyamino acids, producing glycine and aldehydes, via a retro-aldol mechanism. In Mycobacterium avium (strain 104), this protein is Serine hydroxymethyltransferase.